Reading from the N-terminus, the 212-residue chain is Prolactin (212 aa).

The first 26 residues, 1 to 26, serve as a signal peptide directing secretion; the sequence is MARCCKCPRLHLAVTVLACVLVFTEG. Intrachain disulfides connect cysteine 71/cysteine 185 and cysteine 202/cysteine 212.

The protein belongs to the somatotropin/prolactin family. As to expression, pituitary gland.

The protein resides in the secreted. The sequence is that of Prolactin (prl) from Ictalurus punctatus (Channel catfish).